The following is a 241-amino-acid chain: tRNA pseudouridine synthase A (241 aa).

Catalysis depends on Asp-52, which acts as the Nucleophile. Residue Tyr-110 participates in substrate binding.

Belongs to the tRNA pseudouridine synthase TruA family. As to quaternary structure, homodimer.

It carries out the reaction uridine(38/39/40) in tRNA = pseudouridine(38/39/40) in tRNA. In terms of biological role, formation of pseudouridine at positions 38, 39 and 40 in the anticodon stem and loop of transfer RNAs. The chain is tRNA pseudouridine synthase A from Aquifex aeolicus (strain VF5).